The sequence spans 293 residues: Protease HtpX (293 aa).

2 consecutive transmembrane segments (helical) span residues 4–24 and 34–54; these read IALF…VLSL and GLMI…LLMS. Residue H139 participates in Zn(2+) binding. E140 is a catalytic residue. Position 143 (H143) interacts with Zn(2+). 2 helical membrane-spanning segments follow: residues 158 to 178 and 193 to 213; these read VVNT…AGFM and LIYF…ASII. E222 contacts Zn(2+).

This sequence belongs to the peptidase M48B family. It depends on Zn(2+) as a cofactor.

It localises to the cell inner membrane. In Escherichia coli O127:H6 (strain E2348/69 / EPEC), this protein is Protease HtpX.